The sequence spans 554 residues: CTP synthase (554 aa).

The amidoligase domain stretch occupies residues 1 to 265 (MTPLIFVTGG…DELVIVQFKL (265 aa)). S13 provides a ligand contact to CTP. S13 contacts UTP. Residues 14–19 (SLGKGI) and D71 each bind ATP. The Mg(2+) site is built by D71 and E139. CTP is bound by residues 146–148 (DIE), 186–191 (KTKPTQ), and K222. UTP contacts are provided by residues 186 to 191 (KTKPTQ) and K222. The 254-residue stretch at 292-545 (TIAVVGKYVD…VRAAREKKAG (254 aa)) folds into the Glutamine amidotransferase type-1 domain. G353 contacts L-glutamine. The Nucleophile; for glutamine hydrolysis role is filled by C380. L-glutamine contacts are provided by residues 381 to 384 (YGMQ), E404, and R471. Catalysis depends on residues H518 and E520.

Belongs to the CTP synthase family. Homotetramer.

It catalyses the reaction UTP + L-glutamine + ATP + H2O = CTP + L-glutamate + ADP + phosphate + 2 H(+). The enzyme catalyses L-glutamine + H2O = L-glutamate + NH4(+). The catalysed reaction is UTP + NH4(+) + ATP = CTP + ADP + phosphate + 2 H(+). It participates in pyrimidine metabolism; CTP biosynthesis via de novo pathway; CTP from UDP: step 2/2. With respect to regulation, allosterically activated by GTP, when glutamine is the substrate; GTP has no effect on the reaction when ammonia is the substrate. The allosteric effector GTP functions by stabilizing the protein conformation that binds the tetrahedral intermediate(s) formed during glutamine hydrolysis. Inhibited by the product CTP, via allosteric rather than competitive inhibition. In terms of biological role, catalyzes the ATP-dependent amination of UTP to CTP with either L-glutamine or ammonia as the source of nitrogen. Regulates intracellular CTP levels through interactions with the four ribonucleotide triphosphates. This Xanthomonas oryzae pv. oryzae (strain MAFF 311018) protein is CTP synthase.